Here is a 262-residue protein sequence, read N- to C-terminus: Transmembrane protein 270 (262 aa).

5 consecutive transmembrane segments (helical) span residues 6-26, 30-50, 67-87, 92-112, and 127-147; these read LVRS…ALLI, AHLY…LLGL, PVGR…CLAL, LVWA…KWLG, and LFLS…LLVW. Positions 226–262 are disordered; it reads QEAEPQKALGLSSETPPPGPPAPGARPVLPEPGTPGE. Pro residues predominate over residues 240–262; that stretch reads TPPPGPPAPGARPVLPEPGTPGE.

The protein localises to the membrane. This chain is Transmembrane protein 270, found in Bos taurus (Bovine).